Reading from the N-terminus, the 100-residue chain is Urease subunit gamma (100 aa).

This sequence belongs to the urease gamma subunit family. In terms of assembly, heterotrimer of UreA (gamma), UreB (beta) and UreC (alpha) subunits. Three heterotrimers associate to form the active enzyme.

Its subcellular location is the cytoplasm. It carries out the reaction urea + 2 H2O + H(+) = hydrogencarbonate + 2 NH4(+). Its pathway is nitrogen metabolism; urea degradation; CO(2) and NH(3) from urea (urease route): step 1/1. In Delftia acidovorans (strain DSM 14801 / SPH-1), this protein is Urease subunit gamma.